The sequence spans 239 residues: N-glycosylase/DNA lyase (239 aa).

Positions 24, 51, and 62 each coordinate 8-oxoguanine. Residues 118-182 are helix-hairpin-helix; that stretch reads ERYYEDMTLL…EDVRIIKLTR (65 aa). Catalysis depends on Lys-142, which acts as the Schiff-base intermediate with DNA. Phe-146 and Pro-172 together coordinate 8-oxoguanine. Asp-174 is an active-site residue. 8-oxoguanine-binding residues include Asp-208 and Trp-212.

Belongs to the archaeal N-glycosylase/DNA lyase (AGOG) family.

The catalysed reaction is 2'-deoxyribonucleotide-(2'-deoxyribose 5'-phosphate)-2'-deoxyribonucleotide-DNA = a 3'-end 2'-deoxyribonucleotide-(2,3-dehydro-2,3-deoxyribose 5'-phosphate)-DNA + a 5'-end 5'-phospho-2'-deoxyribonucleoside-DNA + H(+). DNA repair enzyme that is part of the base excision repair (BER) pathway; protects from oxidative damage by removing the major product of DNA oxidation, 8-oxoguanine (GO), from single- and double-stranded DNA substrates. The sequence is that of N-glycosylase/DNA lyase from Pyrococcus horikoshii (strain ATCC 700860 / DSM 12428 / JCM 9974 / NBRC 100139 / OT-3).